A 345-amino-acid chain; its full sequence is Probable 1-aminocyclopropane-1-carboxylate deaminase (345 aa).

At Lys58 the chain carries N6-(pyridoxal phosphate)lysine. Ser85 functions as the Nucleophile in the catalytic mechanism.

The protein belongs to the ACC deaminase/D-cysteine desulfhydrase family. It depends on pyridoxal 5'-phosphate as a cofactor.

It catalyses the reaction 1-aminocyclopropane-1-carboxylate + H2O = 2-oxobutanoate + NH4(+). In terms of biological role, catalyzes a cyclopropane ring-opening reaction, the irreversible conversion of 1-aminocyclopropane-1-carboxylate (ACC) to ammonia and alpha-ketobutyrate. In Cryptococcus neoformans var. neoformans serotype D (strain JEC21 / ATCC MYA-565) (Filobasidiella neoformans), this protein is Probable 1-aminocyclopropane-1-carboxylate deaminase.